The following is a 392-amino-acid chain: Sulfate adenylyltransferase (392 aa).

The protein belongs to the sulfate adenylyltransferase family.

The enzyme catalyses sulfate + ATP + H(+) = adenosine 5'-phosphosulfate + diphosphate. It functions in the pathway sulfur metabolism; hydrogen sulfide biosynthesis; sulfite from sulfate: step 1/3. The chain is Sulfate adenylyltransferase from Trichormus variabilis (strain ATCC 29413 / PCC 7937) (Anabaena variabilis).